A 434-amino-acid polypeptide reads, in one-letter code: Methylenetetrahydrofolate--tRNA-(uracil-5-)-methyltransferase TrmFO (434 aa).

8-13 contributes to the FAD binding site; the sequence is GAGLAG.

It belongs to the MnmG family. TrmFO subfamily. FAD is required as a cofactor.

Its subcellular location is the cytoplasm. The enzyme catalyses uridine(54) in tRNA + (6R)-5,10-methylene-5,6,7,8-tetrahydrofolate + NADH + H(+) = 5-methyluridine(54) in tRNA + (6S)-5,6,7,8-tetrahydrofolate + NAD(+). It catalyses the reaction uridine(54) in tRNA + (6R)-5,10-methylene-5,6,7,8-tetrahydrofolate + NADPH + H(+) = 5-methyluridine(54) in tRNA + (6S)-5,6,7,8-tetrahydrofolate + NADP(+). Catalyzes the folate-dependent formation of 5-methyl-uridine at position 54 (M-5-U54) in all tRNAs. This Exiguobacterium sibiricum (strain DSM 17290 / CCUG 55495 / CIP 109462 / JCM 13490 / 255-15) protein is Methylenetetrahydrofolate--tRNA-(uracil-5-)-methyltransferase TrmFO.